We begin with the raw amino-acid sequence, 98 residues long: Small ribosomal subunit protein uS17 (98 aa).

It belongs to the universal ribosomal protein uS17 family. In terms of assembly, part of the 30S ribosomal subunit.

Its function is as follows. One of the primary rRNA binding proteins, it binds specifically to the 5'-end of 16S ribosomal RNA. In Synechococcus sp. (strain CC9605), this protein is Small ribosomal subunit protein uS17.